The following is a 173-amino-acid chain: Co-chaperone protein HscB homolog (173 aa).

Residues 5-77 form the J domain; sequence CHYALFDLQP…PRRARYLLAI (73 aa).

This sequence belongs to the HscB family. As to quaternary structure, interacts with HscA and stimulates its ATPase activity.

Its function is as follows. Co-chaperone involved in the maturation of iron-sulfur cluster-containing proteins. Seems to help targeting proteins to be folded toward HscA. The polypeptide is Co-chaperone protein HscB homolog (Pseudomonas putida (strain ATCC 700007 / DSM 6899 / JCM 31910 / BCRC 17059 / LMG 24140 / F1)).